The sequence spans 78 residues: Acyl carrier protein (78 aa).

The region spanning Ser2–Leu77 is the Carrier domain. Ser37 carries the post-translational modification O-(pantetheine 4'-phosphoryl)serine.

This sequence belongs to the acyl carrier protein (ACP) family. 4'-phosphopantetheine is transferred from CoA to a specific serine of apo-ACP by AcpS. This modification is essential for activity because fatty acids are bound in thioester linkage to the sulfhydryl of the prosthetic group.

The protein resides in the cytoplasm. The protein operates within lipid metabolism; fatty acid biosynthesis. Carrier of the growing fatty acid chain in fatty acid biosynthesis. The protein is Acyl carrier protein of Saccharophagus degradans (strain 2-40 / ATCC 43961 / DSM 17024).